The primary structure comprises 1040 residues: Contactin-2 (1040 aa).

The signal sequence occupies residues 1 to 30 (MGAPARKRASLLLLLLATMALVSSPGWSFS). 6 consecutive Ig-like C2-type domains span residues 39-130 (PVFE…AVLR), 135-224 (QEFS…SVFS), 241-324 (PSIK…GRII), 329-413 (PEWL…AELA), 419-506 (PDFR…GILS), and 511-605 (TKIT…ATVL). Disulfide bonds link cysteine 63-cysteine 113, cysteine 157-cysteine 209, cysteine 263-cysteine 308, and cysteine 350-cysteine 397. N-linked (GlcNAc...) asparagine glycosylation is found at asparagine 78, asparagine 200, and asparagine 206. 4 N-linked (GlcNAc...) asparagine glycosylation sites follow: asparagine 463, asparagine 479, asparagine 500, and asparagine 527. 4 consecutive Fibronectin type-III domains span residues 612-710 (PPGG…TKEA), 715-812 (APSG…SAEE), 817-913 (APAK…MKPP), and 917-1008 (PPGN…NGGT). Asparagine 777 carries an N-linked (GlcNAc...) asparagine glycan. Positions 796–798 (RGD) match the Cell attachment site motif. 3 N-linked (GlcNAc...) asparagine glycosylation sites follow: asparagine 832, asparagine 920, and asparagine 942. Residues 897–922 (GTGPASPSADAMTMKPPPRRPPGNIS) are disordered. Serine 1014 is lipidated: GPI-anchor amidated serine. Positions 1015-1040 (SAVRPAHPGPVFSCMVILMLAGCQRL) are cleaved as a propeptide — removed in mature form.

Belongs to the immunoglobulin superfamily. Contactin family.

The protein localises to the cell membrane. In terms of biological role, in conjunction with another transmembrane protein, CNTNAP2, contributes to the organization of axonal domains at nodes of Ranvier by maintaining voltage-gated potassium channels at the juxtaparanodal region. This is Contactin-2 (Cntn2) from Mus musculus (Mouse).